Here is a 1143-residue protein sequence, read N- to C-terminus: Serine/threonine-protein kinase BRI1-like 2 (1143 aa).

The first 31 residues, 1 to 31, serve as a signal peptide directing secretion; it reads MTTSPIRVRIRTRIQISFIFLLTHLSQSSSS. Topologically, residues 32–756 are extracellular; sequence DQSSLKTDSL…GTRAASWANS (725 aa). Residues 68–75 carry the Cys pair 1 motif; sequence CQFSGVTC. 24 LRR repeats span residues 77-101, 102-125, 126-150, 151-175, 177-200, 203-227, 228-250, 251-275, 277-299, 300-324, 326-349, 351-373, 374-398, 399-422, 424-446, 447-470, 472-493, 494-518, 520-542, 570-594, 610-634, 635-660, 662-681, and 682-707; these read GGRVTEINLSGSGLSGIVSFNAFTS, LDSLSVLKLSENFFVLNSTSLLLL, PLTLTHLELSSSGLIGTLPENFFSK, YSNLISITLSYNNFTGKLPNDLFLS, KKLQTLDLSYNNITGPISGLTIPL, CVSMTYLDFSGNSISGYISDSLINC, TNLKSLNLSYNNFDGQIPKSFGE, LKLLQSLDLSHNRLTGWIPPEIGDT, RSLQNLRLSYNNFTGVIPESLSS, CSWLQSLDLSNNNISGPFPNTILRS, GSLQILLLSNNLISGDFPTSISAC, SLRIADFSSNRFSGVIPPDLCPG, AASLEELRLPDNLVTGEIPPAISQC, SELRTIDLSLNYLNGTIPPEIGNL, KLEQFIAWYNNIAGEIPPEIGKL, QNLKDLILNNNQLTGEIPPEFFNC, NIEWVSFTSNRLTGEVPKDFGI, LSRLAVLQLGNNNFTGEIPPELGKC, TLVWLDLNTNHLTGEIPPRLGRQ, VGGLVEFSGIRPERLLQIPSLKSCD, YQTIEYLDLSYNQLRGKIPDEIGEM, IALQVLELSHNQLSGEIPFTIGQLKN, GVFDASDNRLQGQIPESFSN, and LSFLVQIDLSNNELTGPIPQRGQLST. N-linked (GlcNAc...) asparagine glycosylation is found at Asn-84 and Asn-118. Residues Asn-163, Asn-188, Asn-226, and Asn-234 are each glycosylated (N-linked (GlcNAc...) asparagine). 2 N-linked (GlcNAc...) asparagine glycosylation sites follow: Asn-288 and Asn-312. N-linked (GlcNAc...) asparagine glycosylation is present at Asn-412. Asn-469 carries an N-linked (GlcNAc...) asparagine glycan. N-linked (GlcNAc...) asparagine glycosylation is present at Asn-506. Asn-681 carries N-linked (GlcNAc...) asparagine glycosylation. The short motif at 720 to 727 is the Cys pair 2 element; it reads CGVPLPEC. A helical transmembrane segment spans residues 757–777; sequence IVLGVLISAASVCILIVWAIA. Residues 778–1143 are Cytoplasmic-facing; sequence VRARRRDADD…NNSHSHSNSL (366 aa). Thr-835 carries the phosphothreonine modification. The Protein kinase domain maps to 838–1129; it reads FSAASMIGHG…LQVVASLREL (292 aa). ATP is bound by residues 844-852 and Lys-866; that span reads IGHGGFGEV. Tyr-911 carries the phosphotyrosine modification. Asp-966 acts as the Proton acceptor in catalysis. Ser-1001 bears the Phosphoserine mark. Tyr-1009 is subject to Phosphotyrosine.

Belongs to the protein kinase superfamily. Ser/Thr protein kinase family. As to quaternary structure, interacts with TTL3. Expressed in provascular and procambial sites throughout plant development. Expressed throughout globe- to heart-staged embryos. Then, it is restricted to procambial cells by the late torpedo stage, and this pattern persists throughout the duration of embryo development. After germination, it is expressed not only in procambial cells throughout the plant but also in all lateral organ primordia before the onset of vascularization.

It localises to the cell membrane. The catalysed reaction is L-seryl-[protein] + ATP = O-phospho-L-seryl-[protein] + ADP + H(+). The enzyme catalyses L-threonyl-[protein] + ATP = O-phospho-L-threonyl-[protein] + ADP + H(+). Receptor with a serine/threonine-protein kinase activity, which may transduce extracellular spatial and temporal signals into downstream cell differentiation responses in provascular and procambial cells. In contrast to BRI1, BRL1 and BRL3, it does not bind brassinolide. The protein is Serine/threonine-protein kinase BRI1-like 2 of Arabidopsis thaliana (Mouse-ear cress).